The primary structure comprises 177 residues: Large ribosomal subunit protein uL6 (177 aa).

It belongs to the universal ribosomal protein uL6 family. Part of the 50S ribosomal subunit.

Its function is as follows. This protein binds to the 23S rRNA, and is important in its secondary structure. It is located near the subunit interface in the base of the L7/L12 stalk, and near the tRNA binding site of the peptidyltransferase center. The protein is Large ribosomal subunit protein uL6 of Klebsiella pneumoniae (strain 342).